The primary structure comprises 178 residues: FXYD domain-containing ion transport regulator 5 (178 aa).

The signal sequence occupies residues 1 to 21 (MSPSGRLCLLTIVGLILPTRG). The Extracellular segment spans residues 22–145 (QTLKDTTSSS…FYDEHTLRKR (124 aa)). The disordered stretch occupies residues 23-131 (TLKDTTSSSS…QTLKPSGFHE (109 aa)). Low complexity-rich tracts occupy residues 26 to 36 (DTTSSSSADST) and 68 to 77 (TPQPQTQTQQ). A compositionally biased stretch (polar residues) spans 103–125 (DTTTLSERPSPSTDVQTDPQTLK). The helical transmembrane segment at 146 to 164 (GLLVAAVLFITGIIILTSG) threads the bilayer. Over 165–178 (KCRQLSRLCRNRCR) the chain is Cytoplasmic.

Belongs to the FXYD family. As to quaternary structure, regulatory subunit of the sodium/potassium-transporting ATPase which is composed of a catalytic alpha subunit, a non-catalytic beta subunit and an additional regulatory subunit. The regulatory subunit, a member of the FXYD protein family, modulates the enzymatic activity in a tissue- and isoform-specific way by changing affinities of the Na+/K+-ATPase toward Na(+), K(+) or ATP. Glycosylated.

It is found in the cell membrane. The protein localises to the basolateral cell membrane. Associates with and regulates the activity of the sodium/potassium-transporting ATPase (NKA) which catalyzes the hydrolysis of ATP coupled with the exchange of Na(+) and K(+) ions across the plasma membrane. May increase NKA activity by increasing the apparent affinity for Na(+). Involved in down-regulation of E-cadherin which results in reduced cell adhesion. Promotes metastasis. This chain is FXYD domain-containing ion transport regulator 5 (FXYD5), found in Homo sapiens (Human).